Here is a 287-residue protein sequence, read N- to C-terminus: ATP synthase gamma chain (287 aa).

The protein belongs to the ATPase gamma chain family. F-type ATPases have 2 components, CF(1) - the catalytic core - and CF(0) - the membrane proton channel. CF(1) has five subunits: alpha(3), beta(3), gamma(1), delta(1), epsilon(1). CF(0) has three main subunits: a, b and c.

The protein localises to the cell inner membrane. Produces ATP from ADP in the presence of a proton gradient across the membrane. The gamma chain is believed to be important in regulating ATPase activity and the flow of protons through the CF(0) complex. The polypeptide is ATP synthase gamma chain (Geobacter sp. (strain M21)).